The primary structure comprises 356 residues: Arginine kinase Scy s 2 (356 aa).

The region spanning 9–91 (KLEEGFKKLE…FDPIIEDYHK (83 aa)) is the Phosphagen kinase N-terminal domain. Position 64 to 68 (64 to 68 (GVGVY)) interacts with L-arginine. The region spanning 119 to 356 (FVISTRVRCG…LELIKMEKEM (238 aa)) is the Phosphagen kinase C-terminal domain. ATP contacts are provided by residues 122-126 (STRVR) and histidine 185. Glutamate 225 lines the L-arginine pocket. Position 229 (arginine 229) interacts with ATP. An L-arginine-binding site is contributed by cysteine 271. ATP is bound by residues 280–284 (RASVH) and 309–314 (RGTRGE). An L-arginine-binding site is contributed by glutamate 314.

The protein belongs to the ATP:guanido phosphotransferase family. In terms of tissue distribution, muscle (at protein level).

It carries out the reaction L-arginine + ATP = N(omega)-phospho-L-arginine + ADP + H(+). Its function is as follows. Catalyzes the reversible transfer of high energy ATP gamma-phosphate group to L-arginine. The protein is Arginine kinase Scy s 2 of Scylla serrata (Mud crab).